Here is a 36-residue protein sequence, read N- to C-terminus: Omega-agatoxin-Aa1b (36 aa).

The protein belongs to the neurotoxin 04 (omega-agtx) family. 01 (type I omega-agtx) subfamily. Expressed by the venom gland.

The protein resides in the secreted. In terms of biological role, omega-agatoxin are antagonist of voltage-gated calcium channels. They block insect neuromuscular transmission presynaptically. This toxin is a blocker of L-type calcium channels (Cav/CACNA1). This is Omega-agatoxin-Aa1b from Agelenopsis aperta (North American funnel-web spider).